The primary structure comprises 88 residues: Small ribosomal subunit protein uS15c (88 aa).

The protein belongs to the universal ribosomal protein uS15 family. In terms of assembly, part of the 30S ribosomal subunit.

It localises to the plastid. Its subcellular location is the chloroplast. This Nasturtium officinale (Watercress) protein is Small ribosomal subunit protein uS15c (rps15).